Reading from the N-terminus, the 277-residue chain is Phosphatidylglycerol--prolipoprotein diacylglyceryl transferase (277 aa).

Transmembrane regions (helical) follow at residues 18-38 (IAIY…YFMA), 54-74 (DLLV…YVIF), 91-111 (EGGI…IVFA), and 115-135 (GLSF…GQAI). Arg-137 lines the a 1,2-diacyl-sn-glycero-3-phospho-(1'-sn-glycerol) pocket. The next 3 helical transmembrane spans lie at 177–197 (QPTF…LLLL), 205–225 (GELF…IEGM), and 236–256 (LRTA…LWVY).

It belongs to the Lgt family.

It is found in the cell membrane. It carries out the reaction L-cysteinyl-[prolipoprotein] + a 1,2-diacyl-sn-glycero-3-phospho-(1'-sn-glycerol) = an S-1,2-diacyl-sn-glyceryl-L-cysteinyl-[prolipoprotein] + sn-glycerol 1-phosphate + H(+). Its pathway is protein modification; lipoprotein biosynthesis (diacylglyceryl transfer). Catalyzes the transfer of the diacylglyceryl group from phosphatidylglycerol to the sulfhydryl group of the N-terminal cysteine of a prolipoprotein, the first step in the formation of mature lipoproteins. This is Phosphatidylglycerol--prolipoprotein diacylglyceryl transferase from Shouchella clausii (strain KSM-K16) (Alkalihalobacillus clausii).